The chain runs to 110 residues: Phosphoribosyl-AMP cyclohydrolase (110 aa).

Asp-74 lines the Mg(2+) pocket. Cys-75 provides a ligand contact to Zn(2+). Mg(2+)-binding residues include Asp-76 and Asp-78. Residues Cys-91 and Cys-98 each coordinate Zn(2+).

It belongs to the PRA-CH family. In terms of assembly, homodimer. It depends on Mg(2+) as a cofactor. Requires Zn(2+) as cofactor.

It localises to the cytoplasm. The catalysed reaction is 1-(5-phospho-beta-D-ribosyl)-5'-AMP + H2O = 1-(5-phospho-beta-D-ribosyl)-5-[(5-phospho-beta-D-ribosylamino)methylideneamino]imidazole-4-carboxamide. It functions in the pathway amino-acid biosynthesis; L-histidine biosynthesis; L-histidine from 5-phospho-alpha-D-ribose 1-diphosphate: step 3/9. Functionally, catalyzes the hydrolysis of the adenine ring of phosphoribosyl-AMP. This Lacticaseibacillus paracasei (strain ATCC 334 / BCRC 17002 / CCUG 31169 / CIP 107868 / KCTC 3260 / NRRL B-441) (Lactobacillus paracasei) protein is Phosphoribosyl-AMP cyclohydrolase.